The primary structure comprises 215 residues: Riboflavin synthase (215 aa).

Lumazine-binding repeat units lie at residues 1–96 and 97–193; these read MFTG…FGGH and IVSG…EQFL. Residues 4 to 6, 47 to 49, 61 to 66, 100 to 102, Lys135, 144 to 146, and 158 to 163 each bind 2,4-dihydroxypteridine; these read GII, CLT, DVMSET, GHI, SLT, and SIIPHT.

Homotrimer.

It carries out the reaction 2 6,7-dimethyl-8-(1-D-ribityl)lumazine + H(+) = 5-amino-6-(D-ribitylamino)uracil + riboflavin. It participates in cofactor biosynthesis; riboflavin biosynthesis; riboflavin from 2-hydroxy-3-oxobutyl phosphate and 5-amino-6-(D-ribitylamino)uracil: step 2/2. Catalyzes the dismutation of two molecules of 6,7-dimethyl-8-ribityllumazine, resulting in the formation of riboflavin and 5-amino-6-(D-ribitylamino)uracil. This Actinobacillus pleuropneumoniae (Haemophilus pleuropneumoniae) protein is Riboflavin synthase (ribE).